The chain runs to 384 residues: DNA replication and repair protein RecF (384 aa).

43–50 lines the ATP pocket; the sequence is GENGSGKT.

The protein belongs to the RecF family.

It localises to the cytoplasm. The RecF protein is involved in DNA metabolism; it is required for DNA replication and normal SOS inducibility. RecF binds preferentially to single-stranded, linear DNA. It also seems to bind ATP. The sequence is that of DNA replication and repair protein RecF from Brucella suis biovar 1 (strain 1330).